The primary structure comprises 133 residues: Probable mitochondrial pyruvate carrier 2 (133 aa).

The next 3 helical transmembrane spans lie at 39–55 (VTNL…IVPI), 73–91 (ASSL…TLIS), and 99–116 (MLAA…YNIY).

The protein belongs to the mitochondrial pyruvate carrier (MPC) (TC 2.A.105) family.

The protein localises to the mitochondrion inner membrane. Its function is as follows. May mediate the uptake of pyruvate into mitochondria. The sequence is that of Probable mitochondrial pyruvate carrier 2 from Dictyostelium discoideum (Social amoeba).